The chain runs to 171 residues: 3-hydroxydecanoyl-[acyl-carrier-protein] dehydratase (171 aa).

Histidine 69 is a catalytic residue.

Belongs to the thioester dehydratase family. FabA subfamily. In terms of assembly, homodimer.

It is found in the cytoplasm. It catalyses the reaction a (3R)-hydroxyacyl-[ACP] = a (2E)-enoyl-[ACP] + H2O. The enzyme catalyses (3R)-hydroxydecanoyl-[ACP] = (2E)-decenoyl-[ACP] + H2O. It carries out the reaction (2E)-decenoyl-[ACP] = (3Z)-decenoyl-[ACP]. The protein operates within lipid metabolism; fatty acid biosynthesis. In terms of biological role, necessary for the introduction of cis unsaturation into fatty acids. Catalyzes the dehydration of (3R)-3-hydroxydecanoyl-ACP to E-(2)-decenoyl-ACP and then its isomerization to Z-(3)-decenoyl-ACP. Can catalyze the dehydratase reaction for beta-hydroxyacyl-ACPs with saturated chain lengths up to 16:0, being most active on intermediate chain length. This Caulobacter sp. (strain K31) protein is 3-hydroxydecanoyl-[acyl-carrier-protein] dehydratase.